The following is a 90-amino-acid chain: Small ribosomal subunit protein uS15c (90 aa).

This sequence belongs to the universal ribosomal protein uS15 family. Part of the 30S ribosomal subunit.

It localises to the plastid. It is found in the chloroplast. This Piper cenocladum (Ant piper) protein is Small ribosomal subunit protein uS15c (rps15).